A 1420-amino-acid chain; its full sequence is MKDLVKFLKAQSKTSEDFDVIKIGLASPDMIRSWSYGEVKKPETINYRTFKPERDGLFCARIFGPVKDYECLCGKYKRLKHRGVICEKCGVEVTQAKVRRERMGHIELASPVAHIWFLKSLPSRIGLLLDMPLRDIERVLYFESYIVIEPGMTDLERGQLLTEEQFLDAEDRWQDEFDAKMGAEAIQALLRDMDLEVECETLREELQSTNSETKRKKITKRLKLLESFIQSGNKPEWMVMTVLPVLPPDLRPLVPLDGGRFATSDLNDLYRRVINRNNRLKRLLDLIAPDIIVRNEKRMLQESVDALLDNGRRGRAITGSNRRPLKSLADMIKGKQGRFRQNLLGKRVDYSGRSVITVGPYLHLHQCGLPKKMALELFRPFIYAKLESRGFATTIKAAKKMVEREDAIVWDILADVIREHPILLNRAPTLHRLGIQAFEPILIEGKAIQLHPLVCAAFNADFDGDQMAVHVPLTLEAQLEARALMMSTNNILSPANGEPIIVPSQDVVLGLYYMTRDKVNGKGEGMLLQDSREAEKAYRTGQAELHSRVKVRITEYVKNAIGEFEPQTHLVDTTIGRAILWMIAPKGMPFSLFNQTLGKKAISKLINESYRRLGLKESVLFADHIMYTGFAYAARSGSSVGIDDMVIPQKKYEIISAAEEEVAEIQEQFQSGLVTAGERYNKVIDIWAAANERVAKAMMENLSQEEVINREGQPEKQASFNSIFMMADSGARGSAAQIRQLAGMRGLMARPDGSIIETPITANFREGLNVLQYFISTHGARKGLADTALKTANSGYLTRRLVDVAQDLVIIEDDCGTHEGIVMTPLIEGGDVKEALRDRVLGRVAAEDILKPGTNEVLISRNTLLDEKLCDVIDENSVDSIKVRSVVTCDTDFGVCAKCYGRDLARGHLINQGEAVGVIAAQSIGEPGTQLTMRTFHIGGAASAAAKESSVQVKNTGTLRLTNVKFVTNKEGKLVLTSRNTELTIIDTFGRTKEHYKVPYGAVLNHADGEEVTAGETVANWDPHTMPVISEVSGFVKFVEIVDGLTVTRQTDELTGLSSIVVQDVGERATAGKDLRPALKLVDAQGNDIFIPGTDVMAQYFLPGKAIVSLDDGAEVFVGEPLARIPQESVGTKDITGGLPRVADLFEARKPKEPAILAEISGIVSFGKETKGKRRLLITPMEGETYEEMIPKWRQLNVFEGELVQRGDLISDGAETPHDILRLRGVHAVTDYIVNEVQEVYRLQGVKINDKHIEVIVRQMLRKAIITNAYDSEFLEGEQVEVARVKIVNRKRAEEGKPLVEFERELLGITKASLATESFISAASFQETTRVLTEAAVAGKRDELRGLKENVIVGRLIPAGTGFAYHQNRQKNRLVGGMENTTEVKLSAVDEEEIASEFTFSAEDATANLAEMLNMADDAE.

The Zn(2+) site is built by cysteine 71, cysteine 73, cysteine 86, and cysteine 89. Residues aspartate 461, aspartate 463, and aspartate 465 each coordinate Mg(2+). Residues cysteine 815, cysteine 889, cysteine 896, and cysteine 899 each contribute to the Zn(2+) site.

Belongs to the RNA polymerase beta' chain family. As to quaternary structure, the RNAP catalytic core consists of 2 alpha, 1 beta, 1 beta' and 1 omega subunit. When a sigma factor is associated with the core the holoenzyme is formed, which can initiate transcription. Mg(2+) is required as a cofactor. The cofactor is Zn(2+).

It catalyses the reaction RNA(n) + a ribonucleoside 5'-triphosphate = RNA(n+1) + diphosphate. Its function is as follows. DNA-dependent RNA polymerase catalyzes the transcription of DNA into RNA using the four ribonucleoside triphosphates as substrates. The protein is DNA-directed RNA polymerase subunit beta' of Histophilus somni (strain 2336) (Haemophilus somnus).